Reading from the N-terminus, the 1108-residue chain is Probable E3 ubiquitin ligase SUD1 (1108 aa).

Positions 1–60 (MEISPADSLSISGAAASEVVSEPSVSSSSSSSSPNQASPNPFSNMDPAVSTATGSRYVDD) are disordered. Low complexity predominate over residues 10 to 44 (SISGAAASEVVSEPSVSSSSSSSSPNQASPNPFSN). An RING-CH-type zinc finger spans residues 60 to 121 (DDEDEEDVCR…EVCKHPFSFS (62 aa)). Zn(2+)-binding residues include cysteine 68, cysteine 71, cysteine 85, cysteine 87, histidine 95, cysteine 98, cysteine 111, and cysteine 114. The next 2 helical transmembrane spans lie at 157–177 (FVLS…WRLA) and 197–217 (VILT…FIFL). Over residues 237 to 246 (ERDDDVDRNG) the composition is skewed to basic and acidic residues. Positions 237-273 (ERDDDVDRNGARAARRPAGQANRNLAGEGNGEDAGDQ) are disordered. Residues 286–308 (ENVLARLDIQAARLEAQVEQMFD) are a coiled coil. 8 helical membrane-spanning segments follow: residues 339–359 (FTVL…PFTL), 362–382 (IILY…VAAS), 462–482 (AVGY…IALI), 489–509 (PLTV…PSLL), 525–545 (VAFL…WWLD), 572–592 (LVHW…VSLL), 630–650 (VLLS…LPVK), and 669–689 (PFTE…FIIE). The disordered stretch occupies residues 762–784 (PNRSRLRAGNVNTGEEYEDDDEQ). Helical transmembrane passes span 796–816 (IILL…ALIV), 844–864 (YAFV…RYAI), 894–914 (AIWV…LVIV), 923–943 (SPVF…KIWT), 982–1002 (EIVF…YVLA), and 1017–1036 (SAVY…FCFC).

As to expression, expressed in cotyledons, leaves, roots, stems, inflorescences and siliques. Expression higher at the top than at the base of the stem.

It is found in the membrane. It catalyses the reaction S-ubiquitinyl-[E2 ubiquitin-conjugating enzyme]-L-cysteine + [acceptor protein]-L-lysine = [E2 ubiquitin-conjugating enzyme]-L-cysteine + N(6)-ubiquitinyl-[acceptor protein]-L-lysine.. It participates in protein modification; protein ubiquitination. Functionally, probable E3 ubiquitin ligase acting as a positive post-transcriptional regulator of 3-hydroxy-3-methylglutaryl-coenzyme A reductase activity. Might be involved in the quality control that degrades misfolded proteins. The protein is Probable E3 ubiquitin ligase SUD1 (SUD1) of Arabidopsis thaliana (Mouse-ear cress).